Here is a 345-residue protein sequence, read N- to C-terminus: Tetraacyldisaccharide 4'-kinase (345 aa).

Position 54 to 61 (54 to 61 (TLGGAGKT)) interacts with ATP.

Belongs to the LpxK family.

It catalyses the reaction a lipid A disaccharide + ATP = a lipid IVA + ADP + H(+). It participates in glycolipid biosynthesis; lipid IV(A) biosynthesis; lipid IV(A) from (3R)-3-hydroxytetradecanoyl-[acyl-carrier-protein] and UDP-N-acetyl-alpha-D-glucosamine: step 6/6. Its function is as follows. Transfers the gamma-phosphate of ATP to the 4'-position of a tetraacyldisaccharide 1-phosphate intermediate (termed DS-1-P) to form tetraacyldisaccharide 1,4'-bis-phosphate (lipid IVA). The chain is Tetraacyldisaccharide 4'-kinase from Allorhizobium ampelinum (strain ATCC BAA-846 / DSM 112012 / S4) (Agrobacterium vitis (strain S4)).